We begin with the raw amino-acid sequence, 78 residues long: Large ribosomal subunit protein eL20 (78 aa).

This sequence belongs to the eukaryotic ribosomal protein eL20 family. In terms of assembly, part of the 50S ribosomal subunit. Binds 23S rRNA.

This is Large ribosomal subunit protein eL20 from Pyrobaculum calidifontis (strain DSM 21063 / JCM 11548 / VA1).